Consider the following 2385-residue polypeptide: Neuron navigator 3 (2385 aa).

The segment at 17–38 is disordered; sequence SKPVHTALPIPNLGTTGSQHCS. The segment covering 29–38 has biased composition (polar residues); the sequence is LGTTGSQHCS. The 108-residue stretch at 77–184 folds into the Calponin-homology (CH) domain; that stretch reads KEDSKIYTDW…LFFSLSRYKQ (108 aa). Residues 203-625 form a disordered region; the sequence is VTHASPPSEA…LPQQQQHSHP (423 aa). 3 stretches are compositionally biased toward polar residues: residues 210-243, 258-279, and 297-316; these read SEASQAKTQQDMQSSLAARYATQSNHSGIATSQK, GSSSKVQGASNLNRRSQSFNSI, and KGPQSSSGVNGNVQPPSTAG. Residues 318 to 329 show a composition bias toward low complexity; sequence PPASAIPSPSAS. The segment covering 335–352 has biased composition (polar residues); it reads KSMNVKHSATSTMLTVKQ. Composition is skewed to low complexity over residues 353–363 and 427–439; these read SSTATSPTPSS and NSGLNSGGSTNSS. Basic and acidic residues predominate over residues 465–491; it reads PKEKEEKNRDKNKVCTEKPVKEEKDQV. The span at 521–535 shows a compositional bias: low complexity; it reads IPSSSGIPKPGSKVP. Polar residues-rich tracts occupy residues 537 to 548, 557 to 567, and 591 to 625; these read VKQTISPGSTAS, TKGSPSQSLSK, and ASPSGSCTMTVAQSSGQSTGNGAVQLPQQQQHSHP. A coiled-coil region spans residues 679-707; it reads ETRRMRTVKNIADLRQNLEETMSSLRGTQ. 6 disordered regions span residues 877–1312, 1351–1370, 1410–1468, 1650–1778, 1850–1881, and 2360–2385; these read ADSW…SPLF, SSSSAGSKDTPSYQSMTSLH, LSES…SAMS, GALN…KRQN, DRLKAETGNTAKPTRPPSESSSSTSSSSSRQS, and SSTQSCDSESTSHHEDILDSSLESTL. A compositionally biased stretch (low complexity) spans 882–895; the sequence is DSSSVSSGLSDTLD. The span at 896–925 shows a compositional bias: polar residues; the sequence is NISTDDLNTTSSVSSYSNITVPSRKNTQLR. The span at 942–959 shows a compositional bias: basic and acidic residues; sequence EELKKPEEDFDSHGDAGG. Over residues 979-988 the composition is skewed to polar residues; it reads ASLSVSQTGS. A compositionally biased stretch (basic and acidic residues) spans 1014–1026; the sequence is GKTDDAKASEKGK. Composition is skewed to low complexity over residues 1074–1092 and 1157–1170; these read GSSAMITSSGATITSGSAT and SSTSSIDSNVSSKS. Residues 1187–1196 are compositionally biased toward polar residues; sequence GRSSPVTVNQ. Low complexity-rich tracts occupy residues 1206-1226 and 1253-1263; these read VSDSESVSLSGSPKSSPTSAS and GAKAGGKSASA. Residues 1264–1289 are compositionally biased toward polar residues; the sequence is PNTEGVKSSSVMPSPSTTLARQGSLE. Residues 1296–1305 show a composition bias toward gly residues; sequence GSMGSAGGLS. Residues 1436–1445 are compositionally biased toward basic and acidic residues; it reads NQEEGKEWLR. The segment covering 1446-1462 has biased composition (polar residues); that stretch reads SHSTGGLQDTGNQSPLV. A phosphoserine mark is found at Ser1459 and Ser1463. Residues 1562-1653 are a coiled coil; that stretch reads AEEKAHSEQI…AQAAIQGALN (92 aa). The span at 1672 to 1689 shows a compositional bias: low complexity; the sequence is SVSSINSATSHSSIGSGN. Over residues 1701–1714 the composition is skewed to polar residues; sequence WVNSRGSELRSSFK. Residues 1794-1861 adopt a coiled-coil conformation; the sequence is EAEAEIILQL…LKAETGNTAK (68 aa). Over residues 1867-1881 the composition is skewed to low complexity; that stretch reads SESSSSTSSSSSRQS.

This sequence belongs to the Nav/unc-53 family. As to expression, highly expressed in brain. Expressed at low levels in heart and placenta. Present in activated T-cells but not in resting T-cells (at protein level). Down-regulated in primary neuroblastoma.

It is found in the nucleus outer membrane. Plays a role in cell migration. May be involved in neuron regeneration. May regulate IL2 production by T-cells. This is Neuron navigator 3 (NAV3) from Homo sapiens (Human).